The sequence spans 572 residues: Proline--tRNA ligase (572 aa).

It belongs to the class-II aminoacyl-tRNA synthetase family. ProS type 1 subfamily. Homodimer.

Its subcellular location is the cytoplasm. The catalysed reaction is tRNA(Pro) + L-proline + ATP = L-prolyl-tRNA(Pro) + AMP + diphosphate. In terms of biological role, catalyzes the attachment of proline to tRNA(Pro) in a two-step reaction: proline is first activated by ATP to form Pro-AMP and then transferred to the acceptor end of tRNA(Pro). As ProRS can inadvertently accommodate and process non-cognate amino acids such as alanine and cysteine, to avoid such errors it has two additional distinct editing activities against alanine. One activity is designated as 'pretransfer' editing and involves the tRNA(Pro)-independent hydrolysis of activated Ala-AMP. The other activity is designated 'posttransfer' editing and involves deacylation of mischarged Ala-tRNA(Pro). The misacylated Cys-tRNA(Pro) is not edited by ProRS. This chain is Proline--tRNA ligase, found in Bacillus licheniformis (strain ATCC 14580 / DSM 13 / JCM 2505 / CCUG 7422 / NBRC 12200 / NCIMB 9375 / NCTC 10341 / NRRL NRS-1264 / Gibson 46).